The following is a 200-amino-acid chain: Outer-membrane lipoprotein LolB (200 aa).

The first 18 residues, 1-18 (MRRGRLLIAGLAALVLSA), serve as a signal peptide directing secretion. Cys-19 is lipidated: N-palmitoyl cysteine. The S-diacylglycerol cysteine moiety is linked to residue Cys-19.

The protein belongs to the LolB family. Monomer.

The protein resides in the cell outer membrane. Functionally, plays a critical role in the incorporation of lipoproteins in the outer membrane after they are released by the LolA protein. This Alkalilimnicola ehrlichii (strain ATCC BAA-1101 / DSM 17681 / MLHE-1) protein is Outer-membrane lipoprotein LolB.